A 96-amino-acid chain; its full sequence is Co-chaperonin GroES (96 aa).

The protein belongs to the GroES chaperonin family. In terms of assembly, heptamer of 7 subunits arranged in a ring. Interacts with the chaperonin GroEL.

It localises to the cytoplasm. In terms of biological role, together with the chaperonin GroEL, plays an essential role in assisting protein folding. The GroEL-GroES system forms a nano-cage that allows encapsulation of the non-native substrate proteins and provides a physical environment optimized to promote and accelerate protein folding. GroES binds to the apical surface of the GroEL ring, thereby capping the opening of the GroEL channel. The chain is Co-chaperonin GroES from Legionella jeonii.